The primary structure comprises 488 residues: Serine hydroxymethyltransferase, mitochondrial (488 aa).

The N-terminal 20 residues, 1-20 (MAVLRQFVKNSYSSIPKRFY), are a transit peptide targeting the mitochondrion. Lys265 carries the post-translational modification N6-(pyridoxal phosphate)lysine.

This sequence belongs to the SHMT family. As to quaternary structure, homotetramer. Pyridoxal 5'-phosphate serves as cofactor.

It localises to the mitochondrion. The enzyme catalyses (6R)-5,10-methylene-5,6,7,8-tetrahydrofolate + glycine + H2O = (6S)-5,6,7,8-tetrahydrofolate + L-serine. Its pathway is one-carbon metabolism; tetrahydrofolate interconversion. In terms of biological role, interconversion of serine and glycine. This Schizosaccharomyces pombe (strain 972 / ATCC 24843) (Fission yeast) protein is Serine hydroxymethyltransferase, mitochondrial (shm2).